We begin with the raw amino-acid sequence, 432 residues long: Serine--tRNA ligase (432 aa).

237–239 (TSE) is a binding site for L-serine. 268-270 (RSE) is a binding site for ATP. Glu-291 is a binding site for L-serine. 355 to 358 (EISS) provides a ligand contact to ATP. Ser-390 serves as a coordination point for L-serine.

It belongs to the class-II aminoacyl-tRNA synthetase family. Type-1 seryl-tRNA synthetase subfamily. As to quaternary structure, homodimer. The tRNA molecule binds across the dimer.

The protein localises to the cytoplasm. The enzyme catalyses tRNA(Ser) + L-serine + ATP = L-seryl-tRNA(Ser) + AMP + diphosphate + H(+). It catalyses the reaction tRNA(Sec) + L-serine + ATP = L-seryl-tRNA(Sec) + AMP + diphosphate + H(+). Its pathway is aminoacyl-tRNA biosynthesis; selenocysteinyl-tRNA(Sec) biosynthesis; L-seryl-tRNA(Sec) from L-serine and tRNA(Sec): step 1/1. Its function is as follows. Catalyzes the attachment of serine to tRNA(Ser). Is also able to aminoacylate tRNA(Sec) with serine, to form the misacylated tRNA L-seryl-tRNA(Sec), which will be further converted into selenocysteinyl-tRNA(Sec). The polypeptide is Serine--tRNA ligase (Methylobacillus flagellatus (strain ATCC 51484 / DSM 6875 / VKM B-1610 / KT)).